Consider the following 312-residue polypeptide: Pyridoxal kinase (312 aa).

M1 is modified (N-acetylmethionine). Residues S12 and T47 each contribute to the pyridoxal site. T47 contributes to the pyridoxal 5'-phosphate binding site. S59 bears the Phosphoserine mark. D113 lines the ATP pocket. D113 is a binding site for Na(+). D118 provides a ligand contact to Mg(2+). T148 contributes to the Na(+) binding site. Residues 150–153 and 186–187 contribute to the ATP site; these read NQFE and TS. Position 186 (T186) interacts with Na(+). A Phosphoserine modification is found at S213. Residues 226-228 and T233 contribute to the ATP site; that span reads VDA. 234–235 is a pyridoxal 5'-phosphate binding site; it reads GD. Residue D235 is the Proton acceptor of the active site. S285 is subject to Phosphoserine.

It belongs to the pyridoxine kinase family. In terms of assembly, homodimer. It depends on Zn(2+) as a cofactor. Mg(2+) is required as a cofactor.

The protein resides in the cytoplasm. It localises to the cytosol. The enzyme catalyses pyridoxal + ATP = pyridoxal 5'-phosphate + ADP + H(+). It carries out the reaction pyridoxamine + ATP = pyridoxamine 5'-phosphate + ADP + H(+). It catalyses the reaction pyridoxine + ATP = pyridoxine 5'-phosphate + ADP + H(+). It participates in cofactor metabolism; pyridoxal 5'-phosphate salvage; pyridoxal 5'-phosphate from pyridoxal: step 1/1. It functions in the pathway cofactor metabolism; pyridoxal 5'-phosphate salvage; pyridoxine 5'-phosphate from pyridoxine: step 1/1. Its pathway is cofactor metabolism; pyridoxal 5'-phosphate salvage; pyridoxamine 5'-phosphate from pyridoxamine: step 1/1. With respect to regulation, activity is increased in the presence of K(+)or Na(+). Functionally, catalyzes the phosphorylation of the dietary vitamin B6 vitamers pyridoxal (PL), pyridoxine (PN) and pyridoxamine (PM) to form pyridoxal 5'-phosphate (PLP), pyridoxine 5'-phosphate (PNP) and pyridoxamine 5'-phosphate (PMP), respectively. PLP is the active form of vitamin B6, and acts as a cofactor for over 140 different enzymatic reactions. The chain is Pyridoxal kinase (PDXK) from Bos taurus (Bovine).